The chain runs to 4481 residues: Dynein axonemal heavy chain 17 (4481 aa).

The tract at residues 1 to 1792 is stem; sequence MPDLRIDYLE…FANICDAQIK (1792 aa). A Kelch 1 repeat occupies 521-569; the sequence is LLYMCGGLLERPLILVEVVPRYSVMLEMFNTELDNAKLMYDAQMAASAD. The stretch at 759–826 forms a coiled coil; it reads ENVMEYIQEM…GRVANLNKRY (68 aa). 2 TPR repeats span residues 1533 to 1566 and 1688 to 1722; these read VVEA…YLET and IWWT…QLNA. 4 AAA regions span residues 1793–2014, 2074–2295, 2401–2649, and 2747–2996; these read YSYE…VLVV, KIIK…IGFK, ELDP…IFQG, and SYNE…ERRY. ATP-binding positions include 1831–1838 and 2112–2119; these read GPAGTGKT and GNAGSGKS. The Kelch 2 repeat unit spans residues 2229–2275; that stretch reads ISHLRTATPATVSRAGILYINPADLGWNPVVSSWIERRKVQSEKANL. ATP contacts are provided by residues 2439 to 2446 and 2785 to 2792; these read GNAGTGKS and GVGGSGKQ. Residues 2782–2834 form a Kelch 3 repeat; sequence LLVGVGGSGKQSLSRLAAYISALDVFQITLKKGYAIPDLKMDLATQYIKSAVK. 2 coiled-coil regions span residues 3011–3071 and 3241–3293; these read YQNL…IQVV and DVAP…EKIK. Residues 3011-3297 form a stalk region; that stretch reads YQNLLAKKRM…TAEKIKCQQE (287 aa). AAA stretches follow at residues 3389–3616 and 3826–4059; these read LTDD…EIEE and VKNF…VLYN. The stretch at 4138 to 4173 is one TPR 3 repeat; it reads PESPYLYGLHPNAEIGFLTVTSEKLFRTVLEMQPKE. Kelch repeat units lie at residues 4272–4321 and 4339–4385; these read NLGL…DLLQ and VWLA…DMTA.

This sequence belongs to the dynein heavy chain family. In terms of assembly, consists of at least two heavy chains and a number of intermediate and light chains.

It is found in the cytoplasm. It localises to the cytoskeleton. Its subcellular location is the flagellum axoneme. Functionally, force generating protein component of the outer dynein arms (ODAs) in the sperm flagellum. Produces force towards the minus ends of microtubules. Dynein has ATPase activity; the force-producing power stroke is thought to occur on release of ADP. Plays a major role in sperm motility, implicated in sperm flagellar assembly and beating. In Mus musculus (Mouse), this protein is Dynein axonemal heavy chain 17.